Here is a 32-residue protein sequence, read N- to C-terminus: MSDIN-like toxin proprotein 2 (32 aa).

The propeptide occupies 1–10 (MSDINATRLP). Positions 11–17 (HLVRYPP) form a cross-link, cyclopeptide (His-Pro). The propeptide occupies 18–32 (YVGDGTDLTLNRGEK).

This sequence belongs to the MSDIN fungal toxin family. Processed by the macrocyclase-peptidase enzyme POPB to yield a toxic cyclic heptapeptide. POPB first removes 10 residues from the N-terminus. Conformational trapping of the remaining peptide forces the enzyme to release this intermediate rather than proceed to macrocyclization. The enzyme rebinds the remaining peptide in a different conformation and catalyzes macrocyclization of the N-terminal 7 residues.

Its function is as follows. Probable toxin that belongs to the MSDIN-like toxin family responsible for a large number of food poisoning cases and deaths. This chain is MSDIN-like toxin proprotein 2, found in Amanita fuligineoides.